A 340-amino-acid chain; its full sequence is Predicted GPI-anchored protein 46 (340 aa).

A signal peptide spans 1–29 (MKILLIYSMTPKLVIWFTLFVLCLQMGDT). The span at 99–115 (SETTTTTTQESETSIAT) shows a compositional bias: low complexity. 2 disordered regions span residues 99–154 (SETT…SLSS) and 181–212 (MSSSSSSSSGSLRDKSKLKQENKQLQSRIKNY). N127 carries N-linked (GlcNAc...) asparagine glycosylation. Over residues 182–191 (SSSSSSSSGS) the composition is skewed to low complexity. Positions 192-202 (LRDKSKLKQEN) are enriched in basic and acidic residues. N270 is a glycosylation site (N-linked (GlcNAc...) asparagine). The GPI-anchor amidated asparagine moiety is linked to residue N314. A propeptide spans 315–340 (SAPLLWIKISKPTVCLVIALTFLLLG) (removed in mature form).

The protein localises to the cell membrane. Its subcellular location is the secreted. The sequence is that of Predicted GPI-anchored protein 46 (PGA46) from Candida albicans (strain SC5314 / ATCC MYA-2876) (Yeast).